A 238-amino-acid polypeptide reads, in one-letter code: Probable transglycosylase SceD 1 (238 aa).

A signal peptide spans 1 to 27 (MKKTVVASTLAVGLGVTGFAAGNSADA). Residues 87 to 97 (TNAPAQETAEQ) show a composition bias toward polar residues. Positions 87-161 (TNAPAQETAE…SEASEGSSVN (75 aa)) are disordered. Positions 102–156 (EQPQQTEQASTEQPAQEAAPQTEETQQPQQEATTQTTSSSNESTSNESSSSEASE) are enriched in low complexity.

Belongs to the transglycosylase family. SceD subfamily.

It localises to the secreted. Its function is as follows. Is able to cleave peptidoglycan and affects clumping and separation of bacterial cells. The polypeptide is Probable transglycosylase SceD 1 (sceD1) (Staphylococcus saprophyticus subsp. saprophyticus (strain ATCC 15305 / DSM 20229 / NCIMB 8711 / NCTC 7292 / S-41)).